A 137-amino-acid polypeptide reads, in one-letter code: CDGSH iron-sulfur domain-containing protein 3, mitochondrial (137 aa).

An N6-acetyllysine; alternate modification is found at Lys65. Position 65 is an N6-succinyllysine; alternate (Lys65). 4 residues coordinate [2Fe-2S] cluster: Cys70, Cys72, Cys81, and His85. N6-acetyllysine is present on Lys96. The [2Fe-2S] cluster site is built by Cys108, Cys110, Cys119, and His123. The residue at position 124 (Lys124) is an N6-acetyllysine; alternate. An N6-succinyllysine; alternate modification is found at Lys124.

Belongs to the CISD protein family. In terms of assembly, monomer. It depends on [2Fe-2S] cluster as a cofactor.

The protein localises to the mitochondrion. Can transfer its iron-sulfur clusters to the apoferrodoxins FDX1 and FDX2. Contributes to mitochondrial iron homeostasis and in maintaining normal levels of free iron and reactive oxygen species, and thereby contributes to normal mitochondrial function. This Mus musculus (Mouse) protein is CDGSH iron-sulfur domain-containing protein 3, mitochondrial (Cisd3).